The following is an 882-amino-acid chain: Leucine--tRNA ligase (882 aa).

The short motif at 43–53 (PYPSGRIHMGH) is the 'HIGH' region element. The 'KMSKS' region signature appears at 634 to 638 (KMSKS). Position 637 (Lys637) interacts with ATP.

Belongs to the class-I aminoacyl-tRNA synthetase family.

The protein resides in the cytoplasm. It catalyses the reaction tRNA(Leu) + L-leucine + ATP = L-leucyl-tRNA(Leu) + AMP + diphosphate. This Rhodopseudomonas palustris (strain BisB18) protein is Leucine--tRNA ligase.